We begin with the raw amino-acid sequence, 227 residues long: Fibrillarin-like rRNA/tRNA 2'-O-methyltransferase (227 aa).

S-adenosyl-L-methionine is bound by residues Thr-82–Thr-83, Glu-100–Phe-101, Asp-125–Ala-126, and Asp-145–Gln-148.

It belongs to the methyltransferase superfamily. Fibrillarin family. As to quaternary structure, interacts with nop5. Component of box C/D small ribonucleoprotein (sRNP) particles that contain rpl7ae, FlpA and nop5, plus a guide RNA.

Functionally, involved in pre-rRNA and tRNA processing. Utilizes the methyl donor S-adenosyl-L-methionine to catalyze the site-specific 2'-hydroxyl methylation of ribose moieties in rRNA and tRNA. Site specificity is provided by a guide RNA that base pairs with the substrate. Methylation occurs at a characteristic distance from the sequence involved in base pairing with the guide RNA. In Methanosarcina acetivorans (strain ATCC 35395 / DSM 2834 / JCM 12185 / C2A), this protein is Fibrillarin-like rRNA/tRNA 2'-O-methyltransferase.